Here is a 286-residue protein sequence, read N- to C-terminus: Centromere protein P (286 aa).

Residues 1-73 are a coiled coil; it reads MDSETRELRA…RSEHSFLSKL (73 aa). Ser38 is subject to Phosphoserine.

Belongs to the CENP-P/CTF19 family. In terms of assembly, component of the CENPA-CAD complex, composed of CENPI, CENPK, CENPL, CENPO, CENPP, CENPQ, CENPR and CENPS. The CENPA-CAD complex interacts with the CENPA-NAC complex, at least composed of CENPA, CENPC, CENPH, CENPM, CENPN, CENPT and CENPU.

It is found in the nucleus. The protein resides in the chromosome. It localises to the centromere. Functionally, component of the CENPA-CAD (nucleosome distal) complex, a complex recruited to centromeres which is involved in assembly of kinetochore proteins, mitotic progression and chromosome segregation. May be involved in incorporation of newly synthesized CENPA into centromeres via its interaction with the CENPA-NAC complex. The polypeptide is Centromere protein P (Cenpp) (Mus musculus (Mouse)).